The sequence spans 567 residues: Geranylgeranyl transferase type-2 subunit alpha (567 aa).

PFTA repeat units follow at residues 44 to 78, 88 to 122, 124 to 158, 159 to 193, 207 to 241, and 363 to 397; these read LDESVLELTSQILGANPDFATLWNCRREVLQQLEV, LVKAELGFLESCLRVNPKSYGTWHHRCWLLSRLPE, NWARELELCARFLEVDERNFHCWDYRRFVAAQAAV, PPAEELAFTDSLITRNFSNYSSWHYRSCLLPQLHP, VLLKELELVQNAFFTDPNDQSAWFYHRWLLGRADP, and VLQSELESCKELQELEPENKWCLLTIILLMRALDP. Position 98 is a phosphoserine (Ser-98). 5 LRR repeats span residues 442–463, 464–486, 487–508, 509–530, and 534–555; these read EVRVLHLGHKDLTVLCHLEQLL, LVTHLDLSHNRLRALPPALAALR, CLEVLQANDNAIESLDGVTNLP, RLQELILCNNRLQQPAVLQPLT, and RLTLLNLQGNPLCQAEGSSEHL.

It belongs to the protein prenyltransferase subunit alpha family. As to quaternary structure, heterotrimer composed of RABGGTA, RABGGTB and CHM; within this trimer, RABGGTA and RABGGTB form the catalytic component B, while CHM (component A) mediates peptide substrate binding. The Rab GGTase dimer (RGGT) interacts with CHM (component A) prior to Rab protein binding; the association is stabilized by geranylgeranyl pyrophosphate (GGpp). The CHM:RGGT:Rab complex is destabilized by GGpp. Interacts with non-phosphorylated form of RAB8A; phosphorylation of RAB8A at 'Thr-72' disrupts this interaction.

The catalysed reaction is geranylgeranyl diphosphate + L-cysteinyl-[protein] = S-geranylgeranyl-L-cysteinyl-[protein] + diphosphate. With respect to regulation, the enzymatic reaction requires the aid of a Rab escort protein (also called component A), such as CHM. Catalyzes the transfer of a geranylgeranyl moiety from geranylgeranyl diphosphate to both cysteines of Rab proteins with the C-terminal sequence -XXCC, -XCXC and -CCXX, such as RAB1A, RAB3A, RAB5A and RAB7A. In Bos taurus (Bovine), this protein is Geranylgeranyl transferase type-2 subunit alpha (RABGGTA).